A 404-amino-acid polypeptide reads, in one-letter code: Glucose-1-phosphate adenylyltransferase 2 (404 aa).

Residues Tyr-97, Gly-162, Glu-177–Lys-178, and Ser-195 contribute to the alpha-D-glucose 1-phosphate site.

It belongs to the bacterial/plant glucose-1-phosphate adenylyltransferase family. As to quaternary structure, homotetramer.

The enzyme catalyses alpha-D-glucose 1-phosphate + ATP + H(+) = ADP-alpha-D-glucose + diphosphate. Its pathway is glycan biosynthesis; glycogen biosynthesis. Its function is as follows. Involved in the biosynthesis of ADP-glucose, a building block required for the elongation reactions to produce glycogen. Catalyzes the reaction between ATP and alpha-D-glucose 1-phosphate (G1P) to produce pyrophosphate and ADP-Glc. The sequence is that of Glucose-1-phosphate adenylyltransferase 2 from Vibrio vulnificus (strain CMCP6).